Here is a 232-residue protein sequence, read N- to C-terminus: Ribose-5-phosphate isomerase A (232 aa).

Substrate-binding positions include 28–31 (TGST), 83–86 (DGAD), and 96–99 (KGGG). The Proton acceptor role is filled by Glu-105. Position 123 (Lys-123) interacts with substrate.

It belongs to the ribose 5-phosphate isomerase family. Homodimer.

The catalysed reaction is aldehydo-D-ribose 5-phosphate = D-ribulose 5-phosphate. It participates in carbohydrate degradation; pentose phosphate pathway; D-ribose 5-phosphate from D-ribulose 5-phosphate (non-oxidative stage): step 1/1. Functionally, catalyzes the reversible conversion of ribose-5-phosphate to ribulose 5-phosphate. The polypeptide is Ribose-5-phosphate isomerase A (Nitrobacter hamburgensis (strain DSM 10229 / NCIMB 13809 / X14)).